Here is a 404-residue protein sequence, read N- to C-terminus: Probable tRNA sulfurtransferase (404 aa).

The region spanning 60 to 165 is the THUMP domain; the sequence is QPIVEALKLV…DEAAYISYEE (106 aa). ATP contacts are provided by residues 183–184, 208–209, Arg265, Gly287, and Gln296; these read ML and HF.

This sequence belongs to the ThiI family.

The protein resides in the cytoplasm. The catalysed reaction is [ThiI sulfur-carrier protein]-S-sulfanyl-L-cysteine + a uridine in tRNA + 2 reduced [2Fe-2S]-[ferredoxin] + ATP + H(+) = [ThiI sulfur-carrier protein]-L-cysteine + a 4-thiouridine in tRNA + 2 oxidized [2Fe-2S]-[ferredoxin] + AMP + diphosphate. It catalyses the reaction [ThiS sulfur-carrier protein]-C-terminal Gly-Gly-AMP + S-sulfanyl-L-cysteinyl-[cysteine desulfurase] + AH2 = [ThiS sulfur-carrier protein]-C-terminal-Gly-aminoethanethioate + L-cysteinyl-[cysteine desulfurase] + A + AMP + 2 H(+). The protein operates within cofactor biosynthesis; thiamine diphosphate biosynthesis. In terms of biological role, catalyzes the ATP-dependent transfer of a sulfur to tRNA to produce 4-thiouridine in position 8 of tRNAs, which functions as a near-UV photosensor. Also catalyzes the transfer of sulfur to the sulfur carrier protein ThiS, forming ThiS-thiocarboxylate. This is a step in the synthesis of thiazole, in the thiamine biosynthesis pathway. The sulfur is donated as persulfide by IscS. The sequence is that of Probable tRNA sulfurtransferase from Streptococcus pyogenes serotype M3 (strain ATCC BAA-595 / MGAS315).